Here is a 312-residue protein sequence, read N- to C-terminus: Mevalonate kinase (312 aa).

Position 104–114 (104–114 (PISCGLGSSAS)) interacts with ATP. Asp155 (proton acceptor) is an active-site residue.

Belongs to the GHMP kinase family. Mevalonate kinase subfamily. Homodimer. The cofactor is Mg(2+).

It is found in the cytoplasm. It catalyses the reaction (R)-mevalonate + ATP = (R)-5-phosphomevalonate + ADP + H(+). Its pathway is isoprenoid biosynthesis; isopentenyl diphosphate biosynthesis via mevalonate pathway; isopentenyl diphosphate from (R)-mevalonate: step 1/3. Farnesyl- and geranyl-pyrophosphates are competitive inhibitors. Slightly inhibited by high concentration of ATP. In terms of biological role, catalyzes the phosphorylation of (R)-mevalonate (MVA) to (R)-mevalonate 5-phosphate (MVAP). Functions in the mevalonate (MVA) pathway leading to isopentenyl diphosphate (IPP), a key precursor for the biosynthesis of isoprenoid compounds such as archaeal membrane lipids. The sequence is that of Mevalonate kinase from Methanocaldococcus jannaschii (strain ATCC 43067 / DSM 2661 / JAL-1 / JCM 10045 / NBRC 100440) (Methanococcus jannaschii).